Here is a 137-residue protein sequence, read N- to C-terminus: Nucleoside diphosphate kinase (137 aa).

ATP contacts are provided by Lys-10, Phe-58, Arg-86, Thr-92, Arg-103, and Asn-113. The Pros-phosphohistidine intermediate role is filled by His-116.

This sequence belongs to the NDK family. As to quaternary structure, homotetramer. It depends on Mg(2+) as a cofactor.

It is found in the cytoplasm. It catalyses the reaction a 2'-deoxyribonucleoside 5'-diphosphate + ATP = a 2'-deoxyribonucleoside 5'-triphosphate + ADP. The enzyme catalyses a ribonucleoside 5'-diphosphate + ATP = a ribonucleoside 5'-triphosphate + ADP. Functionally, major role in the synthesis of nucleoside triphosphates other than ATP. The ATP gamma phosphate is transferred to the NDP beta phosphate via a ping-pong mechanism, using a phosphorylated active-site intermediate. The sequence is that of Nucleoside diphosphate kinase from Helicobacter acinonychis (strain Sheeba).